The following is a 215-amino-acid chain: NADH-quinone oxidoreductase subunit C (215 aa).

The protein belongs to the complex I 30 kDa subunit family. In terms of assembly, NDH-1 is composed of 14 different subunits. Subunits NuoB, C, D, E, F, and G constitute the peripheral sector of the complex.

It localises to the cell inner membrane. It catalyses the reaction a quinone + NADH + 5 H(+)(in) = a quinol + NAD(+) + 4 H(+)(out). NDH-1 shuttles electrons from NADH, via FMN and iron-sulfur (Fe-S) centers, to quinones in the respiratory chain. The immediate electron acceptor for the enzyme in this species is believed to be ubiquinone. Couples the redox reaction to proton translocation (for every two electrons transferred, four hydrogen ions are translocated across the cytoplasmic membrane), and thus conserves the redox energy in a proton gradient. The polypeptide is NADH-quinone oxidoreductase subunit C (Dinoroseobacter shibae (strain DSM 16493 / NCIMB 14021 / DFL 12)).